A 299-amino-acid chain; its full sequence is MNNIIDGKKLAEKIIMKVKAETTKLRNNYKIQPGIAVIIVGNDPASQVYVTSKSKKAEECGFFSIKHMISKETQEKELLHLIATLNSDPQIHGILVQLPLPDHINTNRITQAIAFQKDVDGFHYINIGKLAANALEDAIIPCTPAGAMMMIEQQCGQDLSGLDAVVVGRSNIVGKPMAALLTAANATVTIAHSRTRDLDDVCRSADILVTAIGRPQMIKKDWVKNGAIIIDVGINRIAAPEKGVGKTRLVGDVDFEEIKEKAAAITPVPGGVGPMTIAMLMVNTLKAAARLHNLPIPKF.

Residues 168–170 (GRS), S193, and I234 contribute to the NADP(+) site.

This sequence belongs to the tetrahydrofolate dehydrogenase/cyclohydrolase family. In terms of assembly, homodimer.

The catalysed reaction is (6R)-5,10-methylene-5,6,7,8-tetrahydrofolate + NADP(+) = (6R)-5,10-methenyltetrahydrofolate + NADPH. It carries out the reaction (6R)-5,10-methenyltetrahydrofolate + H2O = (6R)-10-formyltetrahydrofolate + H(+). The protein operates within one-carbon metabolism; tetrahydrofolate interconversion. In terms of biological role, catalyzes the oxidation of 5,10-methylenetetrahydrofolate to 5,10-methenyltetrahydrofolate and then the hydrolysis of 5,10-methenyltetrahydrofolate to 10-formyltetrahydrofolate. The polypeptide is Bifunctional protein FolD (Bartonella henselae (strain ATCC 49882 / DSM 28221 / CCUG 30454 / Houston 1) (Rochalimaea henselae)).